A 104-amino-acid chain; its full sequence is Pterin-4-alpha-carbinolamine dehydratase (104 aa).

Alanine 2 is subject to N-acetylalanine. Substrate is bound by residues 61–63 and 78–81; these read DHH and STHD.

Belongs to the pterin-4-alpha-carbinolamine dehydratase family. As to quaternary structure, homotetramer and homodimer.

The protein resides in the cytoplasm. It is found in the nucleus. The catalysed reaction is (4aS,6R)-4a-hydroxy-L-erythro-5,6,7,8-tetrahydrobiopterin = (6R)-L-erythro-6,7-dihydrobiopterin + H2O. In terms of biological role, involved in tetrahydrobiopterin biosynthesis. Seems to both prevent the formation of 7-pterins and accelerate the formation of quinonoid-BH2. Coactivator for HNF1A-dependent transcription. Regulates the dimerization of homeodomain protein HNF1A and enhances its transcriptional activity. Also acts as a coactivator for HNF1B-dependent transcription. This chain is Pterin-4-alpha-carbinolamine dehydratase (pcbd), found in Xenopus laevis (African clawed frog).